Here is a 271-residue protein sequence, read N- to C-terminus: Formamidopyrimidine-DNA glycosylase (271 aa).

Residue Pro-2 is the Schiff-base intermediate with DNA of the active site. The active-site Proton donor is Glu-3. The active-site Proton donor; for beta-elimination activity is Lys-58. DNA-binding residues include His-92, Arg-111, and Arg-152. The FPG-type zinc-finger motif lies at 237-271 (SVYGREGEACKQCGRVLKHATIGQRATVWCGSCQR). The active-site Proton donor; for delta-elimination activity is Arg-261.

It belongs to the FPG family. Monomer. Zn(2+) serves as cofactor.

The enzyme catalyses Hydrolysis of DNA containing ring-opened 7-methylguanine residues, releasing 2,6-diamino-4-hydroxy-5-(N-methyl)formamidopyrimidine.. It carries out the reaction 2'-deoxyribonucleotide-(2'-deoxyribose 5'-phosphate)-2'-deoxyribonucleotide-DNA = a 3'-end 2'-deoxyribonucleotide-(2,3-dehydro-2,3-deoxyribose 5'-phosphate)-DNA + a 5'-end 5'-phospho-2'-deoxyribonucleoside-DNA + H(+). In terms of biological role, involved in base excision repair of DNA damaged by oxidation or by mutagenic agents. Acts as a DNA glycosylase that recognizes and removes damaged bases. Has a preference for oxidized purines, such as 7,8-dihydro-8-oxoguanine (8-oxoG). Has AP (apurinic/apyrimidinic) lyase activity and introduces nicks in the DNA strand. Cleaves the DNA backbone by beta-delta elimination to generate a single-strand break at the site of the removed base with both 3'- and 5'-phosphates. In Xanthomonas euvesicatoria pv. vesicatoria (strain 85-10) (Xanthomonas campestris pv. vesicatoria), this protein is Formamidopyrimidine-DNA glycosylase.